The sequence spans 541 residues: MAGAIIENMSTKKLCMVGVALLLLQVLAFLVGGLIAPKPTTYVNPVAMKCIDVRKSHRSSKWLMPWGTEPCKSIQSFDEAANRLIEANDIVFAAHIPNSQFEMSPWFQFMLVVLQLDIAFKLNNYIEDHSMVTLDVAVAYRDDLKEEWKELARSVEQRKLNCILPVDKTVANEGRHYDCDVIPLMELGSVSHKYYLFNIRLPVNERQKMNIGIGEIRDMHVVSIFQNGGFTMVWFAMKTFLTPCIIIIMIWYWRRITMMTRSPVLLEKVIFALGISMTFINIPVEWFSIGYDWTWMLLFGDIRQGIFYAMLLSFWIIFCGEHMMDQAERNRISIYWKQVGPIAFGSCCLFIFDMCERGVQLKNPFYSIWTTDVGAEIAMAFIIVAGICACLYFLFLCFMVYQVFRNISGKRSNLPAMSKARRLHYEGLIFRFKFLMIITLACAALTVVFFITTQITEGNWKLGDLSIELNSAFFTGIYGMWNLYVFALMFLYAPSHKHYGDGQSNDGAGMSSGEELQLTTTITHIDGPTELYRLAGKEAQE.

Topologically, residues 1–15 (MAGAIIENMSTKKLC) are cytoplasmic. The helical transmembrane segment at 16–36 (MVGVALLLLQVLAFLVGGLIA) threads the bilayer. Topologically, residues 37-232 (PKPTTYVNPV…SIFQNGGFTM (196 aa)) are lumenal. The helical transmembrane segment at 233–253 (VWFAMKTFLTPCIIIIMIWYW) threads the bilayer. Over 254–268 (RRITMMTRSPVLLEK) the chain is Cytoplasmic. The chain crosses the membrane as a helical span at residues 269 to 289 (VIFALGISMTFINIPVEWFSI). Residues 290 to 303 (GYDWTWMLLFGDIR) lie on the Lumenal side of the membrane. A helical transmembrane segment spans residues 304-324 (QGIFYAMLLSFWIIFCGEHMM). Topologically, residues 325-331 (DQAERNR) are cytoplasmic. Residues 332 to 352 (ISIYWKQVGPIAFGSCCLFIF) form a helical membrane-spanning segment. The Lumenal segment spans residues 353–379 (DMCERGVQLKNPFYSIWTTDVGAEIAM). The chain crosses the membrane as a helical span at residues 380–400 (AFIIVAGICACLYFLFLCFMV). Residues 401–431 (YQVFRNISGKRSNLPAMSKARRLHYEGLIFR) lie on the Cytoplasmic side of the membrane. Residues 432–452 (FKFLMIITLACAALTVVFFIT) traverse the membrane as a helical segment. The Lumenal segment spans residues 453–471 (TQITEGNWKLGDLSIELNS). Residues 472–492 (AFFTGIYGMWNLYVFALMFLY) form a helical membrane-spanning segment. At 493-541 (APSHKHYGDGQSNDGAGMSSGEELQLTTTITHIDGPTELYRLAGKEAQE) the chain is on the cytoplasmic side.

The protein belongs to the wntless family. As to expression, enriched in the animal hemisphere of the early cleavage embryo, where expression persists until the late gastrula stage. At the neurula stage, strongly expressed at the border of the neural plate and dorsal midline. After the neurula stage, expressed in various organs, including the eye, liver, heart, pronephros, otic vesicle, and dorsal neural tube. Expression in the developing eye is dynamic; expressed in the eye field from stages 23 to 27, and from stage 30 expression is confined to distinct regions including the central part and border of the eye.

It localises to the golgi apparatus membrane. The protein localises to the cytoplasmic vesicle membrane. Its function is as follows. Required for a subset of Wnt-dependent developmental processes, in particular, eye and pronephros development. Regulates the secretion of wnt4, which is required for eye development. The sequence is that of Protein wntless homolog B (wls-b) from Xenopus laevis (African clawed frog).